A 706-amino-acid polypeptide reads, in one-letter code: Choline transporter-like protein 2 (706 aa).

Residues M1–D33 lie on the Cytoplasmic side of the membrane. T14 carries the post-translational modification Phosphothreonine. Residues I34 to A54 traverse the membrane as a helical segment. Residues W55–W232 lie on the Extracellular side of the membrane. Residues N187 and N200 are each glycosylated (N-linked (GlcNAc...) asparagine). A helical membrane pass occupies residues Y233–L253. Residues R254–L256 lie on the Cytoplasmic side of the membrane. A helical transmembrane segment spans residues A257–L277. The Extracellular segment spans residues H278–W315. Residues V316–L336 traverse the membrane as a helical segment. The Cytoplasmic portion of the chain corresponds to R337–P364. The helical transmembrane segment at L365–L385 threads the bilayer. Residues S386–A457 lie on the Extracellular side of the membrane. N-linked (GlcNAc...) asparagine glycosylation is found at N397 and N417. A helical transmembrane segment spans residues N458 to N480. The Cytoplasmic portion of the chain corresponds to K481–S504. A helical membrane pass occupies residues L505–L525. Topologically, residues D526–Y563 are extracellular. The chain crosses the membrane as a helical span at residues I564–L584. The Cytoplasmic portion of the chain corresponds to M585–D599. Residues F600–F620 form a helical membrane-spanning segment. Over F621–Y638 the chain is Extracellular. Residues W639–V659 form a helical membrane-spanning segment. Residues Y660 to A706 are Cytoplasmic-facing.

This sequence belongs to the CTL (choline transporter-like) family. Interacts with COCH. In terms of processing, N-glycosylated.

Its subcellular location is the cell membrane. The protein localises to the mitochondrion outer membrane. The enzyme catalyses choline(out) + n H(+)(in) = choline(in) + n H(+)(out). It catalyses the reaction ethanolamine(out) + n H(+)(in) = ethanolamine(in) + n H(+)(out). Choline/H+ antiporter, mainly in mitochodria. Also acts as a low-affinity ethanolamine/H+ antiporter, regulating the supply of extracellular ethanolamine (Etn) for the CDP-Etn pathway, redistribute intracellular Etn and balance the CDP-Cho and CDP-Etn arms of the Kennedy pathway. The polypeptide is Choline transporter-like protein 2 (SLC44A2) (Bos taurus (Bovine)).